We begin with the raw amino-acid sequence, 372 residues long: GDSL esterase/lipase At1g54020 (372 aa).

An N-terminal signal peptide occupies residues 1 to 26; that stretch reads MECSSVSVLGILLVFPLLHNLVTISG. Ser-40 acts as the Nucleophile in catalysis. 2 N-linked (GlcNAc...) asparagine glycosylation sites follow: Asn-161 and Asn-280. Catalysis depends on residues Asp-314 and His-317.

The protein belongs to the 'GDSL' lipolytic enzyme family.

Its subcellular location is the secreted. The protein is GDSL esterase/lipase At1g54020 of Arabidopsis thaliana (Mouse-ear cress).